A 456-amino-acid polypeptide reads, in one-letter code: Putrescine--pyruvate aminotransferase (456 aa).

Tyrosine 156 is a binding site for substrate. Aspartate 262 contacts pyridoxal 5'-phosphate. At lysine 291 the chain carries N6-(pyridoxal phosphate)lysine. Substrate-binding residues include glycine 322 and arginine 417.

This sequence belongs to the class-III pyridoxal-phosphate-dependent aminotransferase family. Pyridoxal 5'-phosphate serves as cofactor.

It carries out the reaction putrescine + pyruvate = 4-aminobutanal + L-alanine. Its pathway is amine and polyamine degradation; putrescine degradation; 4-aminobutanal from putrescine (transaminase route). In terms of biological role, involved in the putrescine catabolism. Catalyzes the transfer of the amino group from putrescine to pyruvate to yield 4-aminobutanal and alanine. This is Putrescine--pyruvate aminotransferase from Pseudomonas aeruginosa (strain ATCC 15692 / DSM 22644 / CIP 104116 / JCM 14847 / LMG 12228 / 1C / PRS 101 / PAO1).